A 30-amino-acid polypeptide reads, in one-letter code: Cysteine-rich venom protein okinavin (30 aa).

A disordered region spans residues 1-30; sequence SVDFDSESPRKPXIQNEIVDLHNPLRRXVN.

This sequence belongs to the CRISP family. Post-translationally, contains 8 disulfide bonds. As to expression, expressed by the venom gland.

The protein localises to the secreted. In terms of biological role, inhibits calcium-activated potassium channels (KCa), voltage-gated potassium channel (Kv), and the calcium release channel/ryanodine receptor (RyR). The polypeptide is Cysteine-rich venom protein okinavin (Ovophis okinavensis (Ryukyu Island pit viper)).